We begin with the raw amino-acid sequence, 246 residues long: tRNA (guanine-N(7)-)-methyltransferase (246 aa).

The S-adenosyl-L-methionine site is built by Glu-77, Glu-102, Asp-129, and Asp-152. The active site involves Asp-152. Substrate is bound by residues Lys-156, Asp-188, and 225–228 (TKFE).

The protein belongs to the class I-like SAM-binding methyltransferase superfamily. TrmB family.

It carries out the reaction guanosine(46) in tRNA + S-adenosyl-L-methionine = N(7)-methylguanosine(46) in tRNA + S-adenosyl-L-homocysteine. The protein operates within tRNA modification; N(7)-methylguanine-tRNA biosynthesis. Functionally, catalyzes the formation of N(7)-methylguanine at position 46 (m7G46) in tRNA. In Haemophilus influenzae (strain PittGG), this protein is tRNA (guanine-N(7)-)-methyltransferase.